The primary structure comprises 170 residues: Cysteine-rich uncharacterized protein 241L (170 aa).

The polypeptide is Cysteine-rich uncharacterized protein 241L (Acheta domesticus (House cricket)).